We begin with the raw amino-acid sequence, 218 residues long: Eukaryotic translation initiation factor 4E-1 (218 aa).

A compositionally biased stretch (basic and acidic residues) spans 1-11 (MQTEQPPKESQ). Disordered regions lie at residues 1–20 (MQTE…SEPQ) and 198–218 (FSAH…RMSV). Over residues 206-218 (KSGSTRAKTRMSV) the composition is skewed to polar residues.

This sequence belongs to the eukaryotic initiation factor 4E family. In terms of assembly, eIF4F is a multi-subunit complex, the composition of which varies with external and internal environmental conditions. It is composed of at least eIF4A, eIF4E and eIF4G. eIF4E is also known to interact with other partners.

In terms of biological role, recognizes and binds the 7-methylguanosine-containing mRNA cap during an early step in the initiation of protein synthesis and facilitates ribosome binding by inducing the unwinding of the mRNAs secondary structures. This Schizosaccharomyces pombe (strain 972 / ATCC 24843) (Fission yeast) protein is Eukaryotic translation initiation factor 4E-1 (tif451).